A 376-amino-acid polypeptide reads, in one-letter code: tRNA-specific 2-thiouridylase MnmA (376 aa).

ATP is bound by residues 17–24 (GMSGGVDS) and methionine 43. Residues 103–105 (NPD) form an interaction with target base in tRNA region. Residue cysteine 108 is the Nucleophile of the active site. An intrachain disulfide couples cysteine 108 to cysteine 205. Residue glycine 132 participates in ATP binding. Positions 155 to 157 (KDQ) are interaction with tRNA. The active-site Cysteine persulfide intermediate is the cysteine 205. The tract at residues 315–316 (RY) is interaction with tRNA.

This sequence belongs to the MnmA/TRMU family.

Its subcellular location is the cytoplasm. The catalysed reaction is S-sulfanyl-L-cysteinyl-[protein] + uridine(34) in tRNA + AH2 + ATP = 2-thiouridine(34) in tRNA + L-cysteinyl-[protein] + A + AMP + diphosphate + H(+). Functionally, catalyzes the 2-thiolation of uridine at the wobble position (U34) of tRNA, leading to the formation of s(2)U34. This is tRNA-specific 2-thiouridylase MnmA from Dichelobacter nodosus (strain VCS1703A).